The primary structure comprises 427 residues: Glutamate-1-semialdehyde 2,1-aminomutase (427 aa).

An N6-(pyridoxal phosphate)lysine modification is found at K267.

This sequence belongs to the class-III pyridoxal-phosphate-dependent aminotransferase family. HemL subfamily. Homodimer. Pyridoxal 5'-phosphate is required as a cofactor.

It localises to the cytoplasm. It carries out the reaction (S)-4-amino-5-oxopentanoate = 5-aminolevulinate. The protein operates within porphyrin-containing compound metabolism; protoporphyrin-IX biosynthesis; 5-aminolevulinate from L-glutamyl-tRNA(Glu): step 2/2. The polypeptide is Glutamate-1-semialdehyde 2,1-aminomutase (Citrifermentans bemidjiense (strain ATCC BAA-1014 / DSM 16622 / JCM 12645 / Bem) (Geobacter bemidjiensis)).